The following is an 83-amino-acid chain: Protein kreg-1 (83 aa).

The tract at residues 62 to 83 (GHHHHHHGHHFGHHHHHHHGHH) is disordered.

In terms of tissue distribution, weakly expressed in the intestine, but expression is up-regulated in response to Cu(2+).

In terms of biological role, plays a role in the stress response to heavy metals such as copper, probably in a fos-1/kgb-1-dependent manner. The protein is Protein kreg-1 of Caenorhabditis elegans.